The following is a 307-amino-acid chain: S-methyl-5'-thioadenosine phosphorylase (307 aa).

Residues threonine 20, 62–63, and 95–96 contribute to the phosphate site; these read RH and SA. Methionine 197 contacts substrate. Residue serine 198 participates in phosphate binding. 221-223 is a substrate binding site; the sequence is DYD.

Belongs to the PNP/MTAP phosphorylase family. MTAP subfamily. In terms of assembly, homotrimer.

Its subcellular location is the cytoplasm. It localises to the nucleus. It catalyses the reaction S-methyl-5'-thioadenosine + phosphate = 5-(methylsulfanyl)-alpha-D-ribose 1-phosphate + adenine. It participates in amino-acid biosynthesis; L-methionine biosynthesis via salvage pathway; S-methyl-5-thio-alpha-D-ribose 1-phosphate from S-methyl-5'-thioadenosine (phosphorylase route): step 1/1. In terms of biological role, catalyzes the reversible phosphorylation of S-methyl-5'-thioadenosine (MTA) to adenine and 5-methylthioribose-1-phosphate. Involved in the breakdown of MTA, a major by-product of polyamine biosynthesis. Responsible for the first step in the methionine salvage pathway after MTA has been generated from S-adenosylmethionine. Has broad substrate specificity with 6-aminopurine nucleosides as preferred substrates. This Fusarium vanettenii (strain ATCC MYA-4622 / CBS 123669 / FGSC 9596 / NRRL 45880 / 77-13-4) (Fusarium solani subsp. pisi) protein is S-methyl-5'-thioadenosine phosphorylase.